The sequence spans 68 residues: Large ribosomal subunit protein bL35 (68 aa).

The protein belongs to the bacterial ribosomal protein bL35 family.

This Persephonella marina (strain DSM 14350 / EX-H1) protein is Large ribosomal subunit protein bL35.